The primary structure comprises 190 residues: Dynein axonemal light chain 1 (190 aa).

Ala2 carries the post-translational modification N-acetylalanine. LRR repeat units lie at residues 49 to 70 (NCEKLSLSTNCIEKIANLNGLK), 71 to 92 (NLRILSLGRNNIKNLNGLEAVG), 94 to 115 (TLEELWISYNFIEKLKGIHVMK), and 116 to 137 (KLKILYMSNNLVKDWAEFLKLA). Residue Ser56 is modified to Phosphoserine. The LRRCT domain occupies 150–190 (NPLEEKHSAEGNWIDEATKRVPKLKKLDGTPVIKEDEEEES).

The protein belongs to the dynein light chain LC1-type family. As to quaternary structure, interacts with ZMYND10 (via C-terminus). Interacts with DNAH5, a outer arm dynein heavy chain. Interacts with tubulin located within the A-tubule of the outer doublets in a ATP-independent manner. In terms of tissue distribution, expressed in the respiratory epithelium of the upper airways and the ependymal cells lining the brain ventricles.

It is found in the cytoplasm. It localises to the cytoskeleton. The protein resides in the cilium axoneme. Its function is as follows. Part of the multisubunit axonemal ATPase complexes that generate the force for cilia motility and govern beat frequency. Component of the outer arm dynein (ODA). May be involved in a mechanosensory feedback mechanism controlling ODA activity based on external conformational cues by tethering the outer arm dynein heavy chain (DNAH5) to the microtubule within the axoneme. Important for ciliary function in the airways and for the function of the cilia that produce the nodal flow essential for the determination of the left-right asymmetry. This chain is Dynein axonemal light chain 1 (Dnal1), found in Mus musculus (Mouse).